Reading from the N-terminus, the 259-residue chain is MSSNSVKRAPTTATQRLKQDYLRIKKDPVPYICAEPLPSNILEWHYVVRGPEMTPYEGGYYHGKLIFPREFPFKPPSIYMITPNGRFKCNTRLCLSITDFHPDTWNPAWSVSTILTGLLSFMVEKGPTLGSIETSDFTKRQLAAQSLVFNLKDKVFCELFPEVVEEIKQKQKAQDELSSRPQALPLPDVVPDGETHHGQHGLPLLNGHAPGAGPHLAGLQQANRHHGLLGGALANLFVIVGFAAFAYTVKYVLRSIAQE.

Over methionine 1–histidine 226 the chain is Cytoplasmic. The UBC core domain maps to threonine 12–glutamate 162. Cysteine 94 functions as the Glycyl thioester intermediate in the catalytic mechanism. The tract at residues glutamine 174 to histidine 200 is disordered. Residues glycine 227–tyrosine 247 form a helical; Anchor for type IV membrane protein membrane-spanning segment. Residues threonine 248–glutamate 259 lie on the Lumenal side of the membrane.

It belongs to the ubiquitin-conjugating enzyme family.

Its subcellular location is the endoplasmic reticulum membrane. It catalyses the reaction S-ubiquitinyl-[E1 ubiquitin-activating enzyme]-L-cysteine + [E2 ubiquitin-conjugating enzyme]-L-cysteine = [E1 ubiquitin-activating enzyme]-L-cysteine + S-ubiquitinyl-[E2 ubiquitin-conjugating enzyme]-L-cysteine.. It participates in protein modification; protein ubiquitination. In terms of biological role, catalyzes the covalent attachment of ubiquitin to other proteins. Seems to function in the selective degradation of misfolded membrane proteins from the endoplasmic reticulum (ERAD). In cooperation with the GATOR2 complex, catalyzes 'Lys-6'-linked ubiquitination of NPRL2. The polypeptide is Ubiquitin-conjugating enzyme E2 J2 (UBE2J2) (Bos taurus (Bovine)).